The following is a 110-amino-acid chain: Large ribosomal subunit protein uL22 (110 aa).

It belongs to the universal ribosomal protein uL22 family. In terms of assembly, part of the 50S ribosomal subunit.

In terms of biological role, this protein binds specifically to 23S rRNA; its binding is stimulated by other ribosomal proteins, e.g. L4, L17, and L20. It is important during the early stages of 50S assembly. It makes multiple contacts with different domains of the 23S rRNA in the assembled 50S subunit and ribosome. Functionally, the globular domain of the protein is located near the polypeptide exit tunnel on the outside of the subunit, while an extended beta-hairpin is found that lines the wall of the exit tunnel in the center of the 70S ribosome. This is Large ribosomal subunit protein uL22 from Histophilus somni (strain 129Pt) (Haemophilus somnus).